Here is a 279-residue protein sequence, read N- to C-terminus: Digeranylgeranylglyceryl phosphate synthase (279 aa).

A run of 8 helical transmembrane segments spans residues 5-25, 27-47, 90-110, 127-147, 148-168, 198-218, 219-239, and 259-279; these read GFFA…AIVA, LIAT…VLLV, FLLG…IALV, FFGN…GGAY, AGWH…LAML, KTAL…AVPY, LWWG…ILFA, and TLLK…AVFL.

The protein belongs to the UbiA prenyltransferase family. DGGGP synthase subfamily. It depends on Mg(2+) as a cofactor.

The protein localises to the cell membrane. It catalyses the reaction sn-3-O-(geranylgeranyl)glycerol 1-phosphate + (2E,6E,10E)-geranylgeranyl diphosphate = 2,3-bis-O-(geranylgeranyl)-sn-glycerol 1-phosphate + diphosphate. The protein operates within membrane lipid metabolism; glycerophospholipid metabolism. Its function is as follows. Prenyltransferase that catalyzes the transfer of the geranylgeranyl moiety of geranylgeranyl diphosphate (GGPP) to the C2 hydroxyl of (S)-3-O-geranylgeranylglyceryl phosphate (GGGP). This reaction is the second ether-bond-formation step in the biosynthesis of archaeal membrane lipids. The sequence is that of Digeranylgeranylglyceryl phosphate synthase from Methanoregula boonei (strain DSM 21154 / JCM 14090 / 6A8).